Reading from the N-terminus, the 207-residue chain is Tetrathionate reductase subunit B (207 aa).

Residues 1 to 28 (MLISKTLIFYQVVNIVSQKGSGKRRWKM) form the signal peptide. 4Fe-4S ferredoxin-type domains follow at residues 34–63 (YVYVVDVSKCYGCLSCVAACAAENNVPVGY), 75–106 (GRVAFVPKICNHCDNPSCVHACPVNATYKTEE), and 107–136 (GLVLIDDEICIGCGACIQACPYGARFRNPV). Cys-43, Cys-46, Cys-49, Cys-53, Cys-84, Cys-87, Cys-92, Cys-96, Cys-116, Cys-119, Cys-122, Cys-126, Cys-143, Cys-146, Cys-157, and Cys-161 together coordinate [4Fe-4S] cluster.

In terms of assembly, probably composed of three subunits: TtrA, TtrB and TtrC.

It localises to the cell membrane. Its function is as follows. Part of a membrane-bound tetrathionate reductase that catalyzes the reduction of tetrathionate to thiosulfate. TtrB is probably involved in transfer of electrons from TtrC to TtrA. The polypeptide is Tetrathionate reductase subunit B (ttrB) (Archaeoglobus fulgidus (strain ATCC 49558 / DSM 4304 / JCM 9628 / NBRC 100126 / VC-16)).